Consider the following 230-residue polypeptide: Uracil-DNA glycosylase (230 aa).

Catalysis depends on aspartate 70, which acts as the Proton acceptor.

This sequence belongs to the uracil-DNA glycosylase (UDG) superfamily. UNG family.

The protein localises to the cytoplasm. The enzyme catalyses Hydrolyzes single-stranded DNA or mismatched double-stranded DNA and polynucleotides, releasing free uracil.. Excises uracil residues from the DNA which can arise as a result of misincorporation of dUMP residues by DNA polymerase or due to deamination of cytosine. This chain is Uracil-DNA glycosylase, found in Pseudomonas syringae pv. tomato (strain ATCC BAA-871 / DC3000).